The primary structure comprises 571 residues: Isthmin-2 (571 aa).

The first 26 residues, 1–26, serve as a signal peptide directing secretion; sequence MRALRDRAGLLLCVLLLAALLEAALG. Disordered stretches follow at residues 30–60, 116–141, and 257–294; these read KKPRLRGPRPGSLTRLAEVSASPDPRPLKEE, ANTTLSTPNPDTQASASPDPRPLREE, and EKDRAPGEKGEEKEEDEDYPSEDIEGEDQEDKEEDEEE. Residues 116-131 are compositionally biased toward polar residues; the sequence is ANTTLSTPNPDTQASA. Asn117 carries N-linked (GlcNAc...) asparagine glycosylation. A compositionally biased stretch (basic and acidic residues) spans 257 to 268; it reads EKDRAPGEKGEE. Acidic residues predominate over residues 269-294; it reads KEEDEDYPSEDIEGEDQEDKEEDEEE. The N-linked (GlcNAc...) asparagine glycan is linked to Asn300. The region spanning 327–371 is the TSP type-1 domain; that stretch reads EPQKEWSPWSPCSGNCSTGKQQRTRPCGYGCTATETRTCDLPSCP. 3 disulfide bridges follow: Cys338–Cys365, Cys342–Cys370, and Cys353–Cys357. Asn392 carries an N-linked (GlcNAc...) asparagine glycan. An AMOP domain is found at 396–559; it reads MHDQDVDSCE…RACTDNPLEE (164 aa).

Belongs to the isthmin family. In terms of tissue distribution, expressed at high levels in the placenta and at moderate levels in the pancreas, kidney, heart, liver, lung, brain and skeletal muscle.

It localises to the secreted. The protein is Isthmin-2 (ISM2) of Homo sapiens (Human).